Consider the following 56-residue polypeptide: Potassium channel toxin alpha-KTx 9.1 (56 aa).

Residues 1-28 (MSRLFTLVLIVLAMNVMMAIISDPVVEA) form the signal peptide. 3 disulfides stabilise this stretch: cysteine 31-cysteine 47, cysteine 34-cysteine 52, and cysteine 38-cysteine 54.

Expressed by the venom gland.

It is found in the secreted. In terms of biological role, blocks small conductance calcium-activated potassium channels (KCNN, SK). Weakly inhibits the Kv7.1/KCNQ1 channel (10 uM of the toxin inhibits currents by 23.3%). Low toxicity by intracerebroventricular injection into mice. This chain is Potassium channel toxin alpha-KTx 9.1, found in Olivierus martensii (Manchurian scorpion).